The following is a 284-amino-acid chain: 2-dehydro-3-deoxyphosphooctonate aldolase (284 aa).

It belongs to the KdsA family.

It is found in the cytoplasm. The catalysed reaction is D-arabinose 5-phosphate + phosphoenolpyruvate + H2O = 3-deoxy-alpha-D-manno-2-octulosonate-8-phosphate + phosphate. It participates in carbohydrate biosynthesis; 3-deoxy-D-manno-octulosonate biosynthesis; 3-deoxy-D-manno-octulosonate from D-ribulose 5-phosphate: step 2/3. The protein operates within bacterial outer membrane biogenesis; lipopolysaccharide biosynthesis. This is 2-dehydro-3-deoxyphosphooctonate aldolase from Aliivibrio fischeri (strain ATCC 700601 / ES114) (Vibrio fischeri).